The sequence spans 415 residues: WD-40 repeat-containing protein MSI2 (415 aa).

WD repeat units follow at residues 166–206 (GHDK…QDKV), 215–255 (GHES…MQHQ), 258–298 (VHER…APLH), 302–342 (SHEG…EEQL), and 361–401 (GHKA…YRDE). The DWD box signature appears at 232-248 (LFGSAGEDGRLVIWDTR).

The protein belongs to the WD repeat RBAP46/RBAP48/MSI1 family.

Its subcellular location is the nucleus. Its function is as follows. Core histone-binding subunit that may target chromatin assembly factors, chromatin remodeling factors and histone deacetylases to their histone substrates in a manner that is regulated by nucleosomal DNA. This chain is WD-40 repeat-containing protein MSI2 (MSI2), found in Arabidopsis thaliana (Mouse-ear cress).